The chain runs to 32 residues: uncharacterized protein (32 aa).

This is an uncharacterized protein from Haloarcula hispanica (His1V).